The chain runs to 120 residues: Holo-[acyl-carrier-protein] synthase (120 aa).

Residues aspartate 8 and glutamate 60 each contribute to the Mg(2+) site.

The protein belongs to the P-Pant transferase superfamily. AcpS family. It depends on Mg(2+) as a cofactor.

Its subcellular location is the cytoplasm. The enzyme catalyses apo-[ACP] + CoA = holo-[ACP] + adenosine 3',5'-bisphosphate + H(+). In terms of biological role, transfers the 4'-phosphopantetheine moiety from coenzyme A to a Ser of acyl-carrier-protein. The polypeptide is Holo-[acyl-carrier-protein] synthase (Anaplasma marginale (strain Florida)).